We begin with the raw amino-acid sequence, 662 residues long: PsbB mRNA maturation factor Mbb1, chloroplastic (662 aa).

The N-terminal 50 residues, 1–50, are a transit peptide targeting the chloroplast; that stretch reads MSLVPFSQLWRGVRTRGPVEQASSSSSSSSSSRRTWYAPARSQTGVQVAA. Disordered regions lie at residues 14–38 and 75–101; these read RTRG…TWYA and IIAD…RDEA. Low complexity predominate over residues 23 to 32; that stretch reads SSSSSSSSSS. Residues 88 to 101 are compositionally biased toward basic and acidic residues; that stretch reads EGERGDATGSRDEA. TPR repeat units lie at residues 126-160, 161-194, 196-229, 231-263, 269-302, 305-338, 339-372, 373-406, 408-440, and 444-477; these read SRIR…DPAD, PRAY…TGNV, PYIW…DGTH, CAWH…CRRK, AYLY…AEGA, VALW…NPRS, RYVH…NPTD, PALY…DPSD, YMWQ…DPRS, and VYVF…DPKS. Disordered regions lie at residues 540–563 and 598–662; these read SDGN…EAAA and LPDF…RSMG.

As to quaternary structure, part of a 300 kDa complex that associates with RNA.

The protein resides in the plastid. Its subcellular location is the chloroplast stroma. Functionally, involved, directly or indirectly, in the processing of the chloroplast encoded psbB mRNA to its mature form, acting via the 5'-UTR of the psbB mRNA. The polypeptide is PsbB mRNA maturation factor Mbb1, chloroplastic (MBB1) (Chlamydomonas reinhardtii (Chlamydomonas smithii)).